Reading from the N-terminus, the 260-residue chain is MKQRGPAGGRSSSPKPSAPGSGAGEGPDGRSAPASQKINKASANDRSLDSVIAADKIAALKLAPVSRETEARLDRYIALLREWQAKTNLVAPSTLPHLWTRHIADSLQLVDLAPTARRWADLGSGGGFPGVVLACTMAETPGASVHLVERIAKKAAFLREAIRITTSPGVVHLAEIGDNVDRITGPVDCVTARALAPLHQLIGFAEPLMRQGAKALFPKGQDVEAELTEAAKYWNIQPQLHQSRTGDGWIVELNAAERRG.

The segment at 1 to 45 is disordered; sequence MKQRGPAGGRSSSPKPSAPGSGAGEGPDGRSAPASQKINKASAND. Over residues 9–20 the composition is skewed to low complexity; sequence GRSSSPKPSAPG. Polar residues predominate over residues 33 to 45; the sequence is PASQKINKASAND. S-adenosyl-L-methionine is bound by residues Gly123, Phe128, and Arg193.

Belongs to the methyltransferase superfamily. RNA methyltransferase RsmG family.

It localises to the cytoplasm. It catalyses the reaction guanosine(527) in 16S rRNA + S-adenosyl-L-methionine = N(7)-methylguanosine(527) in 16S rRNA + S-adenosyl-L-homocysteine. Specifically methylates the N7 position of guanine in position 527 of 16S rRNA. The chain is Ribosomal RNA small subunit methyltransferase G from Bradyrhizobium diazoefficiens (strain JCM 10833 / BCRC 13528 / IAM 13628 / NBRC 14792 / USDA 110).